We begin with the raw amino-acid sequence, 176 residues long: Ribosome maturation factor RimM (176 aa).

Positions 99–173 (KEGEFHLVDL…WLLIKPPPGL (75 aa)) constitute a PRC barrel domain.

The protein belongs to the RimM family. As to quaternary structure, binds ribosomal protein uS19.

It localises to the cytoplasm. Functionally, an accessory protein needed during the final step in the assembly of 30S ribosomal subunit, possibly for assembly of the head region. Essential for efficient processing of 16S rRNA. May be needed both before and after RbfA during the maturation of 16S rRNA. It has affinity for free ribosomal 30S subunits but not for 70S ribosomes. This Prochlorococcus marinus (strain MIT 9211) protein is Ribosome maturation factor RimM.